A 103-amino-acid polypeptide reads, in one-letter code: uncharacterized protein (103 aa).

3 helical membrane-spanning segments follow: residues 12–34 (GFSW…LTIS), 49–66 (TLMS…ALIA), and 79–101 (FARG…VAGG).

The protein localises to the cell membrane. This is an uncharacterized protein from Pasteurella multocida (strain Pm70).